Consider the following 160-residue polypeptide: SsrA-binding protein (160 aa).

The disordered stretch occupies residues 132–160 (KEFDKRDTVRERDSNRELQRTMRNKGKEE).

It belongs to the SmpB family.

The protein resides in the cytoplasm. Required for rescue of stalled ribosomes mediated by trans-translation. Binds to transfer-messenger RNA (tmRNA), required for stable association of tmRNA with ribosomes. tmRNA and SmpB together mimic tRNA shape, replacing the anticodon stem-loop with SmpB. tmRNA is encoded by the ssrA gene; the 2 termini fold to resemble tRNA(Ala) and it encodes a 'tag peptide', a short internal open reading frame. During trans-translation Ala-aminoacylated tmRNA acts like a tRNA, entering the A-site of stalled ribosomes, displacing the stalled mRNA. The ribosome then switches to translate the ORF on the tmRNA; the nascent peptide is terminated with the 'tag peptide' encoded by the tmRNA and targeted for degradation. The ribosome is freed to recommence translation, which seems to be the essential function of trans-translation. This Pseudomonas entomophila (strain L48) protein is SsrA-binding protein.